The chain runs to 705 residues: Bifunctional arginine dihydrolase/ornithine cyclodeaminase ArgZ (705 aa).

The arginine dihydrolase stretch occupies residues 10–269; sequence CPPDHYDVDY…GAAKCLTLRV (260 aa). Asparagine 22, asparagine 71, arginine 90, arginine 139, histidine 168, aspartate 170, alanine 258, and cysteine 264 together coordinate L-arginine. Residues asparagine 22, asparagine 71, arginine 90, arginine 139, and histidine 168 each contribute to the L-ornithine site. Histidine 168 serves as the catalytic Proton donor/acceptor. 2 residues coordinate L-ornithine: alanine 258 and cysteine 264. Cysteine 264 functions as the Nucleophile in the catalytic mechanism. Residues 285-695 are ornithine cyclodeaminase; sequence SRVIRMEGHL…SLLVRQLQQL (411 aa). Asparagine 525, alanine 526, aspartate 604, serine 636, methionine 637, leucine 638, histidine 639, aspartate 657, aspartate 680, and valine 681 together coordinate NAD(+).

It in the N-terminal section; belongs to the DDAH family. In the C-terminal section; belongs to the AgrE/ArgZ ornithine cyclodeaminase family. In terms of assembly, homotetramer. The cofactor is NAD(+).

It carries out the reaction L-arginine + 2 H2O + 2 H(+) = L-ornithine + 2 NH4(+) + CO2. It catalyses the reaction L-ornithine = L-proline + NH4(+). Arginine dihydrolase activity does not require a metal cofactor. Bifunctional enzyme involved in a cyanobacterial arginine utilization pathway that enables cellular adaptation to nitrogen fluctuations. Catalyzes the hydrolysis of arginine to ornithine, with the release of ammonia and carbon dioxide. Then, probably catalyzes the conversion of ornithine to proline, with the release of ammonia. Is highly specific for arginine and cannot hydrolyze citrulline, dimethylarginine and other amino acids. The polypeptide is Bifunctional arginine dihydrolase/ornithine cyclodeaminase ArgZ (Synechocystis sp. (strain ATCC 27184 / PCC 6803 / Kazusa)).